A 113-amino-acid chain; its full sequence is U11-theraphotoxin-Hhn1j (113 aa).

The signal sequence occupies residues M1–A21. Residues D22–R74 constitute a propeptide that is removed on maturation. The span at L60 to N69 shows a compositional bias: basic and acidic residues. A disordered region spans residues L60–D83. Cystine bridges form between C75-C90, C82-C95, and C89-C110.

Belongs to the neurotoxin 14 (magi-1) family. 01 (HNTX-16) subfamily. As to expression, expressed by the venom gland.

The protein localises to the secreted. Functionally, probable ion channel inhibitor. The sequence is that of U11-theraphotoxin-Hhn1j from Cyriopagopus hainanus (Chinese bird spider).